Consider the following 192-residue polypeptide: Ribosome maturation factor RimM (192 aa).

The 76-residue stretch at 97-172 (EDEYYLADLI…VVLADPPALV (76 aa)) folds into the PRC barrel domain. The tract at residues 168-192 (PPALVGEPEGPESPAEDDDGERHYD) is disordered.

Belongs to the RimM family. In terms of assembly, binds ribosomal protein uS19.

Its subcellular location is the cytoplasm. In terms of biological role, an accessory protein needed during the final step in the assembly of 30S ribosomal subunit, possibly for assembly of the head region. Essential for efficient processing of 16S rRNA. May be needed both before and after RbfA during the maturation of 16S rRNA. It has affinity for free ribosomal 30S subunits but not for 70S ribosomes. This Caulobacter sp. (strain K31) protein is Ribosome maturation factor RimM.